A 648-amino-acid chain; its full sequence is Threonine--tRNA ligase (648 aa).

One can recognise a TGS domain in the interval 1-62; the sequence is MVEIILPDGS…PHGAQVAIIT (62 aa). Residues 243–536 form a catalytic region; it reads DHRRIGKDLD…LVEHYAGWFP (294 aa). 3 residues coordinate Zn(2+): cysteine 336, histidine 387, and histidine 513.

This sequence belongs to the class-II aminoacyl-tRNA synthetase family. In terms of assembly, homodimer. Zn(2+) serves as cofactor.

It localises to the cytoplasm. The enzyme catalyses tRNA(Thr) + L-threonine + ATP = L-threonyl-tRNA(Thr) + AMP + diphosphate + H(+). Catalyzes the attachment of threonine to tRNA(Thr) in a two-step reaction: L-threonine is first activated by ATP to form Thr-AMP and then transferred to the acceptor end of tRNA(Thr). Also edits incorrectly charged L-seryl-tRNA(Thr). The polypeptide is Threonine--tRNA ligase (Magnetococcus marinus (strain ATCC BAA-1437 / JCM 17883 / MC-1)).